The sequence spans 587 residues: Tripartite motif-containing protein 29 (587 aa).

The disordered stretch occupies residues 1 to 71 (MEGADACRSN…SGEGKSGLFS (71 aa)). A phosphoserine mark is found at serine 21, serine 28, serine 58, and serine 104. Position 106 is a phosphotyrosine (tyrosine 106). The B box-type zinc finger occupies 220 to 260 (FEARKCPLHGKTMELFCQTDQTCICYLCMFQEHKNHSTVTV). Zn(2+) contacts are provided by cysteine 225, histidine 228, cysteine 247, and histidine 252. Residues 259 to 348 (TVEEAKAEKE…AVDQVKVIVD (90 aa)) are a coiled coil. At threonine 476 the chain carries Phosphothreonine. Serine 489 carries the post-translational modification Phosphoserine.

In terms of assembly, interacts with VIM and HINT1. Interacts with IKBKG/NEMO. Interacts with STING1.

It localises to the cytoplasm. Its subcellular location is the lysosome. Its function is as follows. Plays a crucial role in the regulation of macrophage activation in response to viral or bacterial infections within the respiratory tract. Mechanistically, TRIM29 interacts with IKBKG/NEMO in the lysosome where it induces its 'Lys-48' ubiquitination and subsequent degradation. In turn, the expression of type I interferons and the production of pro-inflammatory cytokines are inhibited. Additionally, induces the 'Lys-48' ubiquitination of STING1 in a similar way, leading to its degradation. The sequence is that of Tripartite motif-containing protein 29 (Trim29) from Mus musculus (Mouse).